The sequence spans 248 residues: MAGHSQFKNIMHRKGRVDAVRSKVFGKLAREITVAAKLGTPDPAMNPRLRAAVLAARAENMPKDNIERAIKKACGGDAETYEEIRYEGYGPGGAALIVEAQTDNRNRTASDVRSAFTKAGGSLAETGAVSFMFDRVGLVAFDAKVADADTMLEAAIEAGADDVKSDESGHEVTCEQSALGEVAKALEARFGEPRRTSLVWRPQNTVEVDDETGEKLIRLVEMIEDQDDVQNVFVNFAVSDALMAKLHD.

The protein belongs to the TACO1 family.

Its subcellular location is the cytoplasm. This is Probable transcriptional regulatory protein Mnod_7401 from Methylobacterium nodulans (strain LMG 21967 / CNCM I-2342 / ORS 2060).